A 537-amino-acid polypeptide reads, in one-letter code: ATP synthase subunit alpha (537 aa).

Residue 171–178 (GDRQTGKT) coordinates ATP.

It belongs to the ATPase alpha/beta chains family. In terms of assembly, F-type ATPases have 2 components, CF(1) - the catalytic core - and CF(0) - the membrane proton channel. CF(1) has five subunits: alpha(3), beta(3), gamma(1), delta(1), epsilon(1). CF(0) has four main subunits: a, b, b' and c.

It localises to the cell inner membrane. The enzyme catalyses ATP + H2O + 4 H(+)(in) = ADP + phosphate + 5 H(+)(out). Its function is as follows. Produces ATP from ADP in the presence of a proton gradient across the membrane. The alpha chain is a regulatory subunit. This chain is ATP synthase subunit alpha, found in Chloroherpeton thalassium (strain ATCC 35110 / GB-78).